Here is a 551-residue protein sequence, read N- to C-terminus: Structure-specific endonuclease subunit MUS81 (551 aa).

Disordered regions lie at residues 84–131 (HLAS…VGYW) and 229–259 (FRPE…QQRP). Low complexity predominate over residues 92–107 (APSSPSGKKGASKGPP). Residue S95 is modified to Phosphoserine. Residues 110 to 131 (VQDSSMPVPTQPQAGSTSVGYW) show a composition bias toward polar residues. The segment at 124 to 244 (GSTSVGYWPA…HGEDSAVPEA (121 aa)) is interaction with BLM. Positions 131–230 (WPAQNSGARE…GLSTRHAGFR (100 aa)) are winged helix domain (WHD); critical for endonuclease activity. A compositionally biased stretch (basic and acidic residues) spans 229–238 (FRPEEHHGED). Positions 270–372 (LLCVDIGETR…HRVYLVEEHG (103 aa)) constitute an ERCC4 domain. Residues D274, E277, and D307 contribute to the active site. D274, E277, D307, E333, and R334 together coordinate Mg(2+). The segment at 471-545 (VREVFARQLM…LSRTLYQLYC (75 aa)) is helix-hairpin-helix (2HhH); involved in DNA recognition and bending.

It belongs to the XPF family. Part of the heterodimeric DNA structure-specific endonuclease complex MUS81-EME1. Part of the heterodimeric DNA structure-specific endonuclease complex MUS81-EME2. Interacts with BLM; may stimulate the endonuclease activity of MUS81. Interacts with SLX4/BTBD12; this interaction is direct and links the MUS81-EME1 complex to SLX4, which may coordinate the action of the structure-specific endonuclease during DNA repair. Interacts with DCLRE1B/Apollo. Interacts with RECQL5; this interaction stimulates mitotic DNA synthesis. Interacts with CHEK2. The cofactor is Mg(2+). In terms of tissue distribution, expressed highly in testis. Expressed also in bone marrow, brain, thymus and to a lesser extent in heart and skeletal muscle, colon, kidney and spleen.

It localises to the nucleus. Its subcellular location is the nucleolus. Its function is as follows. Catalytic subunit of two functionally distinct, structure-specific, heterodimeric DNA endonucleases MUS81-EME1 and MUS81-EME2 that are involved in the maintenance of genome stability. Both endonucleases have essentially the same substrate specificity though MUS81-EME2 is more active than its MUS81-EME1 counterpart. Both cleave 3'-flaps and nicked Holliday junctions, and exhibit limited endonuclease activity with 5' flaps and nicked double-stranded DNAs. MUS81-EME2 which is active during the replication of DNA is more specifically involved in replication fork processing. Replication forks frequently encounter obstacles to their passage, including DNA base lesions, DNA interstrand cross-links, difficult-to-replicate sequences, transcription bubbles, or tightly bound proteins. One mechanism for the restart of a stalled replication fork involves nucleolytic cleavage mediated by the MUS81-EME2 endonuclease. By acting upon the stalled fork, MUS81-EME2 generates a DNA double-strand break (DSB) that can be repaired by homologous recombination, leading to the restoration of an active fork. MUS81-EME2 could also function in telomere maintenance. MUS81-EME1, on the other hand, is active later in the cell cycle and functions in the resolution of mitotic recombination intermediates including the Holliday junctions, the four-way DNA intermediates that form during homologous recombination. This chain is Structure-specific endonuclease subunit MUS81, found in Mus musculus (Mouse).